The sequence spans 60 residues: Potassium channel toxin alpha-KTx 29.3 (60 aa).

The first 28 residues, 1–28 (MKSVCGVLIILVVLTTMLSISTFSTVGA), serve as a signal peptide directing secretion. 3 cysteine pairs are disulfide-bonded: cysteine 32–cysteine 51, cysteine 40–cysteine 56, and cysteine 44–cysteine 58.

It belongs to the short scorpion toxin superfamily. Potassium channel inhibitor family. Alpha-KTx 29 subfamily. As to expression, expressed by the venom gland.

The protein localises to the secreted. Weakly inhibits the Kv1.3/KCNA3 channel (1 uM of thetoxin inhibits currents by 13.2%) and Kv7.1/KCNQ1 channel (10 uM of the toxin inhibits currents by 27.7%). The protein is Potassium channel toxin alpha-KTx 29.3 of Lychas mucronatus (Chinese swimming scorpion).